The following is a 379-amino-acid chain: Queuine tRNA-ribosyltransferase (379 aa).

The active-site Proton acceptor is the Asp-94. Residues 94–98, Asp-148, Gln-191, and Gly-218 contribute to the substrate site; that span reads DSGGF. An RNA binding region spans residues 249-255; that stretch reads GVGSPDS. Residue Asp-268 is the Nucleophile of the active site. The segment at 273-277 is RNA binding; important for wobble base 34 recognition; the sequence is TRIAR. Zn(2+) is bound by residues Cys-306, Cys-308, Cys-311, and His-337.

This sequence belongs to the queuine tRNA-ribosyltransferase family. Homodimer. Within each dimer, one monomer is responsible for RNA recognition and catalysis, while the other monomer binds to the replacement base PreQ1. Zn(2+) is required as a cofactor.

It carries out the reaction 7-aminomethyl-7-carbaguanine + guanosine(34) in tRNA = 7-aminomethyl-7-carbaguanosine(34) in tRNA + guanine. The protein operates within tRNA modification; tRNA-queuosine biosynthesis. In terms of biological role, catalyzes the base-exchange of a guanine (G) residue with the queuine precursor 7-aminomethyl-7-deazaguanine (PreQ1) at position 34 (anticodon wobble position) in tRNAs with GU(N) anticodons (tRNA-Asp, -Asn, -His and -Tyr). Catalysis occurs through a double-displacement mechanism. The nucleophile active site attacks the C1' of nucleotide 34 to detach the guanine base from the RNA, forming a covalent enzyme-RNA intermediate. The proton acceptor active site deprotonates the incoming PreQ1, allowing a nucleophilic attack on the C1' of the ribose to form the product. After dissociation, two additional enzymatic reactions on the tRNA convert PreQ1 to queuine (Q), resulting in the hypermodified nucleoside queuosine (7-(((4,5-cis-dihydroxy-2-cyclopenten-1-yl)amino)methyl)-7-deazaguanosine). This is Queuine tRNA-ribosyltransferase from Listeria monocytogenes serovar 1/2a (strain ATCC BAA-679 / EGD-e).